The sequence spans 768 residues: Integrin beta-8 (768 aa).

Positions 1 to 42 are cleaved as a signal peptide; it reads MCGSALGLPPAAFVRLRSCRPGPAAFLRAAWVLSLVLGLGRS. Topologically, residues 43-683 are extracellular; it reads ENSRCASSHA…ECFSSPSYLR (641 aa). A PSI domain is found at 46–95; the sequence is RCASSHAVSCSECLALGPDCGWCVHEDFISGGPRSERCDIVSNLISKGCP. 25 cysteine pairs are disulfide-bonded: cysteine 47-cysteine 65, cysteine 55-cysteine 469, cysteine 58-cysteine 83, cysteine 68-cysteine 94, cysteine 211-cysteine 218, cysteine 266-cysteine 307, cysteine 407-cysteine 419, cysteine 439-cysteine 467, cysteine 471-cysteine 491, cysteine 471-cysteine 494, cysteine 481-cysteine 494, cysteine 499-cysteine 528, cysteine 511-cysteine 526, cysteine 520-cysteine 531, cysteine 533-cysteine 546, cysteine 553-cysteine 567, cysteine 561-cysteine 572, cysteine 574-cysteine 583, cysteine 585-cysteine 609, cysteine 593-cysteine 607, cysteine 601-cysteine 612, cysteine 614-cysteine 624, cysteine 627-cysteine 630, cysteine 634-cysteine 661, and cysteine 640-cysteine 657. One can recognise a VWFA domain in the interval 146 to 384; sequence PVDLYYLVDV…NLVVEAYQKL (239 aa). Mg(2+) contacts are provided by aspartate 154 and serine 156. Position 193 (aspartate 193) interacts with Ca(2+). N-linked (GlcNAc...) asparagine glycosylation occurs at asparagine 233. Asparagine 249, aspartate 251, proline 253, and glutamate 254 together coordinate Ca(2+). Glutamate 254 contacts Mg(2+). An N-linked (GlcNAc...) asparagine glycan is attached at asparagine 402. 3 N-linked (GlcNAc...) asparagine glycosylation sites follow: asparagine 421, asparagine 431, and asparagine 456. 4 consecutive I-EGF domains span residues 471-495, 499-547, 548-584, and 585-625; these read CEAS…PQCQ, CHQE…KYCE, KDDF…DRCQ, and CPSA…RFCE. Residue asparagine 648 is glycosylated (N-linked (GlcNAc...) asparagine). A helical transmembrane segment spans residues 684-703; it reads IFFIIFIVTFLIGLLKILII. At 704-768 the chain is on the cytoplasmic side; sequence RQVILQWNSS…NAHETFRCNF (65 aa).

This sequence belongs to the integrin beta chain family. As to quaternary structure, heterodimer of an alpha and a beta subunit. Beta-8 (ITGB8) associates with alpha-V (ITGAV) to form ITGAV:ITGB8. ITGAV:ITGB8 interacts with TGFB1. As to expression, placenta, kidney, brain, ovary, uterus and in several transformed cells.

The protein localises to the cell membrane. Functionally, integrin alpha-V:beta-8 (ITGAV:ITGB8) is a receptor for fibronectin. It recognizes the sequence R-G-D in its ligands. Integrin alpha-V:beta-6 (ITGAV:ITGB6) mediates R-G-D-dependent release of transforming growth factor beta-1 (TGF-beta-1) from regulatory Latency-associated peptide (LAP), thereby playing a key role in TGF-beta-1 activation on the surface of activated regulatory T-cells (Tregs). Required during vasculogenesis. This Oryctolagus cuniculus (Rabbit) protein is Integrin beta-8 (ITGB8).